A 512-amino-acid polypeptide reads, in one-letter code: Spermatocyte protein spe-8 (512 aa).

Residues 1 to 85 (MRSKSSEGDL…PKPSSDNNNS (85 aa)) are disordered. Over residues 15-41 (TQSREDKETTATYSEDTKPETQKERNA) the composition is skewed to basic and acidic residues. The segment covering 68–78 (EAPPPPPPPKP) has biased composition (pro residues). One can recognise an SH2 domain in the interval 114 to 205 (FYHGFMGRNE…YEGMTLICGL (92 aa)). The Protein kinase domain maps to 217–485 (VTLNKKLGEG…KEEVGFHEIE (269 aa)). ATP is bound by residues 223–231 (LGEGQFGEV) and Lys250. Residue Asp344 is the Proton acceptor of the active site.

The protein belongs to the protein kinase superfamily. Tyr protein kinase family. Fes/fps subfamily. In terms of tissue distribution, expression is restricted to male germline.

It localises to the cell membrane. The protein resides in the cytoplasm. It carries out the reaction L-tyrosyl-[protein] + ATP = O-phospho-L-tyrosyl-[protein] + ADP + H(+). In terms of biological role, probable non-receptor tyrosine-protein kinase which plays a role in spermatid activation (spermiogenesis) in hermaphrodites. This chain is Spermatocyte protein spe-8, found in Caenorhabditis elegans.